A 132-amino-acid polypeptide reads, in one-letter code: UPF0146 protein PF0123 (132 aa).

This sequence belongs to the UPF0146 family.

The sequence is that of UPF0146 protein PF0123 from Pyrococcus furiosus (strain ATCC 43587 / DSM 3638 / JCM 8422 / Vc1).